A 363-amino-acid polypeptide reads, in one-letter code: Biotin synthase (363 aa).

A Radical SAM core domain is found at 38–266; sequence NTVQVSTLLS…ETQVRLSAGR (229 aa). Residues C53, C57, and C60 each contribute to the [4Fe-4S] cluster site. [2Fe-2S] cluster-binding residues include C97, C129, C189, and R261. The interval 315–363 is disordered; it reads KAFEKKSQPESVAAEKSKYQSQGEKPRWSRPEHKIDRNLEAQQNAKTKA. Over residues 316–353 the composition is skewed to basic and acidic residues; it reads AFEKKSQPESVAAEKSKYQSQGEKPRWSRPEHKIDRNL. The span at 354-363 shows a compositional bias: polar residues; that stretch reads EAQQNAKTKA.

The protein belongs to the radical SAM superfamily. Biotin synthase family. Homodimer. It depends on [4Fe-4S] cluster as a cofactor. [2Fe-2S] cluster is required as a cofactor.

It carries out the reaction (4R,5S)-dethiobiotin + (sulfur carrier)-SH + 2 reduced [2Fe-2S]-[ferredoxin] + 2 S-adenosyl-L-methionine = (sulfur carrier)-H + biotin + 2 5'-deoxyadenosine + 2 L-methionine + 2 oxidized [2Fe-2S]-[ferredoxin]. It functions in the pathway cofactor biosynthesis; biotin biosynthesis; biotin from 7,8-diaminononanoate: step 2/2. In terms of biological role, catalyzes the conversion of dethiobiotin (DTB) to biotin by the insertion of a sulfur atom into dethiobiotin via a radical-based mechanism. This is Biotin synthase from Christiangramia forsetii (strain DSM 17595 / CGMCC 1.15422 / KT0803) (Gramella forsetii).